The primary structure comprises 762 residues: Subtilisin-like protease SBT3.11 (762 aa).

Positions 1 to 16 are cleaved as a signal peptide; that stretch reads MMSSIVSWWFFWVISA. A propeptide spans 17-116 (activation peptide); that stretch reads VCILKVEFNI…VTPNTFYELQ (100 aa). Residues 37–115 enclose the Inhibitor I9 domain; the sequence is VHIVYLGEKE…QVTPNTFYEL (79 aa). The 490-residue stretch at 120-609 folds into the Peptidase S8 domain; that stretch reads TFDYLGLSHS…GGLVNPNKAA (490 aa). Asp150 acts as the Charge relay system in catalysis. N-linked (GlcNAc...) asparagine glycosylation is present at Asn206. Catalysis depends on His226, which acts as the Charge relay system. 2 N-linked (GlcNAc...) asparagine glycosylation sites follow: Asn241 and Asn371. The Charge relay system role is filled by Ser540.

This sequence belongs to the peptidase S8 family.

It localises to the secreted. The chain is Subtilisin-like protease SBT3.11 from Arabidopsis thaliana (Mouse-ear cress).